The chain runs to 831 residues: Periplasmic nitrate reductase (831 aa).

Positions methionine 1–alanine 29 form a signal peptide, tat-type signal. The region spanning isoleucine 41–aspartate 97 is the 4Fe-4S Mo/W bis-MGD-type domain. Residues cysteine 48, cysteine 51, cysteine 55, and cysteine 83 each coordinate [4Fe-4S] cluster. Residues lysine 85, glutamine 152, asparagine 177, cysteine 181, tryptophan 214–methionine 221, serine 245–histidine 249, glycine 264–aspartate 266, methionine 375, glutamine 379, asparagine 485, serine 511–aspartate 512, lysine 534, aspartate 561, and threonine 721–serine 730 contribute to the Mo-bis(molybdopterin guanine dinucleotide) site. Tryptophan 797 is a binding site for substrate. The Mo-bis(molybdopterin guanine dinucleotide) site is built by asparagine 805 and lysine 822.

The protein belongs to the prokaryotic molybdopterin-containing oxidoreductase family. NasA/NapA/NarB subfamily. As to quaternary structure, component of the periplasmic nitrate reductase NapAB complex composed of NapA and NapB. The cofactor is [4Fe-4S] cluster. It depends on Mo-bis(molybdopterin guanine dinucleotide) as a cofactor. Post-translationally, predicted to be exported by the Tat system. The position of the signal peptide cleavage has not been experimentally proven.

The protein localises to the periplasm. It carries out the reaction 2 Fe(II)-[cytochrome] + nitrate + 2 H(+) = 2 Fe(III)-[cytochrome] + nitrite + H2O. Its function is as follows. Catalytic subunit of the periplasmic nitrate reductase complex NapAB. Receives electrons from NapB and catalyzes the reduction of nitrate to nitrite. The sequence is that of Periplasmic nitrate reductase from Cereibacter sphaeroides (strain ATCC 17023 / DSM 158 / JCM 6121 / CCUG 31486 / LMG 2827 / NBRC 12203 / NCIMB 8253 / ATH 2.4.1.) (Rhodobacter sphaeroides).